The primary structure comprises 266 residues: Agamous-like MADS-box protein AGL97 (266 aa).

In terms of domain architecture, MADS-box spans 3–63 (GVKRKIAIEK…SNSNAAFYSF (61 aa)). A coiled-coil region spans residues 88–130 (WEDESLLKSENLEELREAMDSMSTMLRDLKELEKQRDHQTQTL).

Interacts with AGL27 and AGL62.

The protein localises to the nucleus. Putative transcription factor. The sequence is that of Agamous-like MADS-box protein AGL97 (AGL97) from Arabidopsis thaliana (Mouse-ear cress).